The primary structure comprises 163 residues: Crossover junction endodeoxyribonuclease RuvC (163 aa).

Residues Asp-9, Glu-76, and Asp-148 contribute to the active site. Mg(2+) is bound by residues Asp-9, Glu-76, and Asp-148.

The protein belongs to the RuvC family. Homodimer which binds Holliday junction (HJ) DNA. The HJ becomes 2-fold symmetrical on binding to RuvC with unstacked arms; it has a different conformation from HJ DNA in complex with RuvA. In the full resolvosome a probable DNA-RuvA(4)-RuvB(12)-RuvC(2) complex forms which resolves the HJ. Mg(2+) serves as cofactor.

Its subcellular location is the cytoplasm. It catalyses the reaction Endonucleolytic cleavage at a junction such as a reciprocal single-stranded crossover between two homologous DNA duplexes (Holliday junction).. Its function is as follows. The RuvA-RuvB-RuvC complex processes Holliday junction (HJ) DNA during genetic recombination and DNA repair. Endonuclease that resolves HJ intermediates. Cleaves cruciform DNA by making single-stranded nicks across the HJ at symmetrical positions within the homologous arms, yielding a 5'-phosphate and a 3'-hydroxyl group; requires a central core of homology in the junction. The consensus cleavage sequence is 5'-(A/T)TT(C/G)-3'. Cleavage occurs on the 3'-side of the TT dinucleotide at the point of strand exchange. HJ branch migration catalyzed by RuvA-RuvB allows RuvC to scan DNA until it finds its consensus sequence, where it cleaves and resolves the cruciform DNA. The polypeptide is Crossover junction endodeoxyribonuclease RuvC (Trichormus variabilis (strain ATCC 29413 / PCC 7937) (Anabaena variabilis)).